A 188-amino-acid polypeptide reads, in one-letter code: Pyridoxal 5'-phosphate synthase subunit PdxT (188 aa).

46 to 48 (GES) serves as a coordination point for L-glutamine. Cys-78 serves as the catalytic Nucleophile. L-glutamine-binding positions include Arg-105 and 134-135 (IR). Catalysis depends on charge relay system residues His-170 and Glu-172.

Belongs to the glutaminase PdxT/SNO family. As to quaternary structure, in the presence of PdxS, forms a dodecamer of heterodimers. Only shows activity in the heterodimer.

It catalyses the reaction aldehydo-D-ribose 5-phosphate + D-glyceraldehyde 3-phosphate + L-glutamine = pyridoxal 5'-phosphate + L-glutamate + phosphate + 3 H2O + H(+). The enzyme catalyses L-glutamine + H2O = L-glutamate + NH4(+). The protein operates within cofactor biosynthesis; pyridoxal 5'-phosphate biosynthesis. In terms of biological role, catalyzes the hydrolysis of glutamine to glutamate and ammonia as part of the biosynthesis of pyridoxal 5'-phosphate. The resulting ammonia molecule is channeled to the active site of PdxS. The chain is Pyridoxal 5'-phosphate synthase subunit PdxT from Thermotoga neapolitana (strain ATCC 49049 / DSM 4359 / NBRC 107923 / NS-E).